A 1720-amino-acid chain; its full sequence is TOG array regulator of axonemal microtubules protein 1 (1720 aa).

TOG stretches follow at residues 94-312 (EEDT…RRLE) and 352-596 (PQEL…MPSS). 8 HEAT repeats span residues 175–212 (AFSLALLPQLVVSLREENPALRKDALQILHICLKRSPG), 214–247 (VLRTLIQQGLESTDARLRASTALLLPILLTTEDL), 251–289 (LDLTEVIISLARKLGDQETEEESETAFSALQQIGERLGQ), 345–384 (NLKFGIIPQELHSRLLDQEDYKNRTQAVEELKQVLGKFNP), 390–427 (SSLVGFISLLYNLLDDSNFKVVHGTLEVLHLLVIRLGE), 431–466 (QFLGPVIAASVKVLADNKLVIKQEYMKIFLKLMKEV), 467–504 (GPQQVLCLLLEHLKHKHSRVREEVVNICICSLLTYPSE), and 506–543 (FDLPKLSFDLAPALVDSKRRVRQAALEAFAVLASSMGS). Polar residues-rich tracts occupy residues 794-809 (FGSQTECTSSNGQNPS), 819-829 (PVSSPRTSPKH), 842-852 (DNSVNFSNSWP), and 868-877 (LVSQKSSDPT). Disordered regions lie at residues 794–924 (FGSQ…SLLP), 970–998 (HSSLRSLRNSAAKKRAKLSGSTSDLESPD), and 1067–1087 (KKISHIAEQSPSAGSSSNPQQ). Polar residues predominate over residues 1073–1087 (AEQSPSAGSSSNPQQ). The segment at 1256-1425 (EIALTEALRL…YIKDSVRNLQ (170 aa)) is TOG 3. HEAT repeat units follow at residues 1294–1331 (TKLHETNFAVVQEVKNLRSGVSRAAVVCLSDLFTYLKK) and 1335–1372 (QELDTTVKVLLHKAGESNTFIREDVDKALRAMVNNVTP). The interval 1430–1462 (GEIPLDTPSAKGRRSHTGSVGNTRSSSVSRDAF) is disordered. Polar residues predominate over residues 1446-1458 (TGSVGNTRSSSVS). The interval 1484 to 1720 (SLESAEYLKL…LLDMTILNEL (237 aa)) is TOG 4. 3 HEAT repeats span residues 1485–1522 (LESAEYLKLITGLLNAKDFRDRINGIKQLLSDTENNQD), 1526–1563 (GNIVKIFDAFKSRLHDSNSKVNLVALETMHKMIPLLRD), and 1567–1605 (PIINMLIPAIVDNNLNSKNPGIYAAATNVVQALSQHVDN).

The protein belongs to the Crescerin family. As to quaternary structure, interacts with ARMC9, CCDC66, CEP104 and CSPP1.

The protein localises to the cell projection. Its subcellular location is the cilium. It is found in the cytoplasm. The protein resides in the cytoskeleton. It localises to the cilium axoneme. In terms of biological role, involved in ciliogenesis. It is required for appropriate acetylation and polyglutamylation of ciliary microtubules, and regulation of cilium length. Interacts with microtubules and promotes microtubule polymerization via its HEAT repeat domains, especially those in TOG region 2 and 4. The sequence is that of TOG array regulator of axonemal microtubules protein 1 from Homo sapiens (Human).